Reading from the N-terminus, the 33-residue chain is Dermonecrotic toxin LiSicTox-alphaI-1 (33 aa).

Glu32 contacts Mg(2+).

It belongs to the arthropod phospholipase D family. Class II subfamily. It depends on Mg(2+) as a cofactor. Contains 2 disulfide bonds. As to expression, expressed by the venom gland.

It localises to the secreted. It carries out the reaction an N-(acyl)-sphingosylphosphocholine = an N-(acyl)-sphingosyl-1,3-cyclic phosphate + choline. The enzyme catalyses an N-(acyl)-sphingosylphosphoethanolamine = an N-(acyl)-sphingosyl-1,3-cyclic phosphate + ethanolamine. It catalyses the reaction a 1-acyl-sn-glycero-3-phosphocholine = a 1-acyl-sn-glycero-2,3-cyclic phosphate + choline. The catalysed reaction is a 1-acyl-sn-glycero-3-phosphoethanolamine = a 1-acyl-sn-glycero-2,3-cyclic phosphate + ethanolamine. Functionally, dermonecrotic toxins cleave the phosphodiester linkage between the phosphate and headgroup of certain phospholipids (sphingolipid and lysolipid substrates), forming an alcohol (often choline) and a cyclic phosphate. This toxin acts on sphingomyelin (SM). It may also act on ceramide phosphoethanolamine (CPE), lysophosphatidylcholine (LPC) and lysophosphatidylethanolamine (LPE), but not on lysophosphatidylserine (LPS), and lysophosphatidylglycerol (LPG). It acts by transphosphatidylation, releasing exclusively cyclic phosphate products as second products. In vivo, intradermal injection induces dermonecrosis. Induces hemolysis, increased vascular permeability, edema, inflammatory response, and platelet aggregation. The chain is Dermonecrotic toxin LiSicTox-alphaI-1 from Loxosceles intermedia (Brown spider).